We begin with the raw amino-acid sequence, 376 residues long: Succinyl-diaminopimelate desuccinylase (376 aa).

His66 contributes to the Zn(2+) binding site. Asp68 is an active-site residue. Asp99 contacts Zn(2+). Glu133 functions as the Proton acceptor in the catalytic mechanism. Zn(2+)-binding residues include Glu134, Glu162, and His348.

It belongs to the peptidase M20A family. DapE subfamily. As to quaternary structure, homodimer. It depends on Zn(2+) as a cofactor. Requires Co(2+) as cofactor.

The enzyme catalyses N-succinyl-(2S,6S)-2,6-diaminopimelate + H2O = (2S,6S)-2,6-diaminopimelate + succinate. The protein operates within amino-acid biosynthesis; L-lysine biosynthesis via DAP pathway; LL-2,6-diaminopimelate from (S)-tetrahydrodipicolinate (succinylase route): step 3/3. Its function is as follows. Catalyzes the hydrolysis of N-succinyl-L,L-diaminopimelic acid (SDAP), forming succinate and LL-2,6-diaminopimelate (DAP), an intermediate involved in the bacterial biosynthesis of lysine and meso-diaminopimelic acid, an essential component of bacterial cell walls. This Xanthomonas oryzae pv. oryzae (strain PXO99A) protein is Succinyl-diaminopimelate desuccinylase.